The sequence spans 190 residues: RNA-binding protein OPG065 (190 aa).

The region spanning 5-70 (YIDERSDAEI…DIPPRWFMTT (66 aa)) is the Z-binding domain. Residues 117–184 (NPVTIINEYC…AKLAVDKLLG (68 aa)) enclose the DRBM domain.

It belongs to the orthopoxvirus OPG065 family. Interacts with host G1P2/ISG15. Interacts with host EIF2AK2/PKR. Interacts with host ZBP1.

In terms of biological role, RNA-binding protein that plays a role in the inhibition of multiple cellular antiviral responses activated by double-stranded RNA (dsRNA), such as inhibition of PKR activation, necroptosis, and IFN-mediated antiviral activities. Recognizes and binds Z-RNA structures via its Z-binding domain and dsRNA via its DRBM domain: RNA-binding activity is required to escape host ZBP1-dependent necroptosis. Mechanistically, the Z-binding domain binds Z-RNAs that are produced during vaccinia virus infection, thereby competing with Z-RNA detection by host ZBP1, suppressing ZBP1-dependent necroptosis. Acts as a key inhibitor of the interferon response by blocking the phosphorylation and subsequent activation of IRF3 and IRF7 kinases that are required for interferon-alpha gene expression. Inhibits NF-kappa-B activation and the ubiquitin-like protein ISG15, which is an early antiviral protein. The binding with host ISG15 subsequently blocks host ISGylation. This chain is RNA-binding protein OPG065 (OPG065), found in Homo sapiens (Human).